The chain runs to 309 residues: Uricase-2 isozyme 1 (309 aa).

Active-site charge relay system residues include Lys18 and Thr64. Residues Thr64, Asp65, Phe166, Arg183, Val238, Gln239, and Asn265 each contribute to the urate site. The active-site Charge relay system is His267. The Microbody targeting signal motif lies at 307–309 (SKL).

It belongs to the uricase family. In terms of assembly, homotetramer. In terms of processing, the N-terminus is blocked. As to expression, expressed predominantly in the uninfected cells of the central tissue of the root nodule.

It is found in the peroxisome. It carries out the reaction urate + O2 + H2O = 5-hydroxyisourate + H2O2. Its pathway is purine metabolism; urate degradation; (S)-allantoin from urate: step 1/3. Catalyzes the oxidation of uric acid to 5-hydroxyisourate, which is further processed to form (S)-allantoin. In Glycine max (Soybean), this protein is Uricase-2 isozyme 1.